The sequence spans 1906 residues: Myosin light chain kinase, smooth muscle (1906 aa).

Ig-like C2-type domains follow at residues 28-117 and 156-244; these read PAFT…VELT and PKFA…AELT. Disordered stretches follow at residues 127–157 and 309–453; these read SLPSSAKTPGGRLSVPPVEHRPSIWGESPPK and ETFY…SKVS. A compositionally biased stretch (basic and acidic residues) spans 309–321; that stretch reads ETFYTSREAKDGK. Composition is skewed to polar residues over residues 345–354 and 384–402; these read LQKTSSTITL and PLMTTTTQENPSLTGQVSP. Residues 403–424 show a composition bias toward basic and acidic residues; the sequence is RSRETENRAGVRKSVKEEKREP. Ig-like C2-type domains lie at 429–517, 521–613, 637–725, and 735–830; these read PQFE…WLLT, PKVE…AQVT, PIFL…ATLT, and PWFI…SSAS. An IIA-1 repeat occupies 660 to 676; it reads VSANPCPEIIWLHNGKE. The 4 X repeats, motif IIA stretch occupies residues 660–1833; the sequence is VSANPCPEII…EVMWYKDDQP (1174 aa). The IIB-1 repeat unit spans residues 693-708; that stretch reads SLYIQEVFPEDTGKYT. The interval 693–1866 is 5 X repeats, motif IIB; sequence SLYIQEVFPE…VCGDDDAKYT (1174 aa). One copy of the IIA-2 repeat lies at 758 to 774; it reads IAGDPFPTVHWFKDGQE. Residues 791-807 form an IIB-2 repeat; sequence TLILRNVQSRHAGQYEI. 2 disordered regions span residues 831–881 and 947–1086; these read RAEM…QEDV and PKTL…APSF. 2 stretches are compositionally biased toward basic and acidic residues: residues 833–850 and 867–881; these read EMLRDGRESASSGERRDG and SSSETRAAEEEQEDV. The stretch at 970-987 is one III-1 repeat; it reads AKKGTPKTPLPEKVPPPK. Residues 970 to 1226 are 4 X repeats, motif III; sequence AKKGTPKTPL…TPPKAATPPQ (257 aa). Pro residues predominate over residues 977–988; that stretch reads TPLPEKVPPPKP. One copy of the III-2 repeat lies at 999 to 1016; sequence AKKKPPAENGSASTPAPN. Residues 1039-1051 are compositionally biased toward basic and acidic residues; that stretch reads VKKEEKNDRKCEH. An III-3 repeat occupies 1061 to 1078; sequence IGKKAENKPAASKPTPPP. Ig-like C2-type domains are found at residues 1084-1172 and 1225-1313; these read PSFT…CKVL and PQIT…VNLT. Residues 1107–1123 form an IIA-3 repeat; that stretch reads ISSDPPASVSWTLDSKA. Residues 1140–1156 form an IIB-3 repeat; the sequence is SLTIEKVMPEDGGEYKC. Residues 1180-1227 are disordered; that stretch reads KAAKPAEKKTKKPKTTLPPVLSTESSEATVKKKPAPKTPPKAATPPQI. An III-4 repeat occupies 1209 to 1226; that stretch reads VKKKPAPKTPPKAATPPQ. The IIB-4 repeat unit spans residues 1281–1297; it reads KLTISSTKQEHCGCYTL. The interval 1317–1364 is motif IA; sequence KPDPPAGTPCASDIRSSSLTLSWYGSSYDGGSAVQSYTVEIWNSVDNK. The Fibronectin type-III domain occupies 1321–1414; it reads PAGTPCASDI…ESEVVKVGEK (94 aa). The segment at 1385–1402 is motif IB; it reads REYKFRVRAANVYGISEP. A disordered region spans residues 1414-1433; it reads KQEEELKEEEAELSDDEGKE. The span at 1415 to 1432 shows a compositional bias: acidic residues; sequence QEEELKEEEAELSDDEGK. In terms of domain architecture, Protein kinase spans 1453-1708; the sequence is YNIEERLGSG…CTQCLQHPWL (256 aa). Residues 1459-1467 and Lys1482 each bind ATP; that span reads LGSGKFGQV. The Proton acceptor role is filled by Asp1574. The calmodulin-binding stretch occupies residues 1700 to 1763; that stretch reads TQCLQHPWLQ…SGMSGRKASG (64 aa). The tract at residues 1716 to 1728 is calmodulin autoinhibition (AM13) region; the sequence is EAKKLSKDRMKKY. Positions 1730–1749 are calmodulin recognition (RS20) region; it reads ARRKWQKTGHAVRAIGRLSS. Ser1762 carries the phosphoserine; by PKG modification. Phosphoserine; by MAPK is present on Ser1768. Positions 1794-1885 constitute an Ig-like C2-type 9 domain; that stretch reads PYFTKTILDM…ATCTAELLVE (92 aa). One copy of the IIA-4 repeat lies at 1817-1833; the sequence is IEGYPDPEVMWYKDDQP. The IIB-5 repeat unit spans residues 1851–1866; sequence SLTISEVCGDDDAKYT. Residues 1885 to 1906 are disordered; the sequence is ETMGKEGEGEGEGEEDEEEEEE. Residues 1893–1906 are compositionally biased toward acidic residues; that stretch reads GEGEGEEDEEEEEE.

This sequence belongs to the protein kinase superfamily. CAMK Ser/Thr protein kinase family. In terms of assembly, all isoforms including Telokin bind calmodulin. Mg(2+) serves as cofactor. It depends on Ca(2+) as a cofactor. In terms of processing, the C-terminus is deglutamylated, leading to the formation of Myosin light chain kinase, smooth muscle, deglutamylated form. The C-terminus is variable, with one to five C-terminal glutamyl residues being removed producing five forms differring in their number of C-terminal glutamyl residues. Acetylated. Post-translationally, phosphorylation of telokin by PKG has no significant effect on its myosin binding activity, but promotes translocation to the membrane. As to expression, isoform telokin is expressed in gizzard, heart, lung, intestine, and skeletal muscle although the levels of the expression in the latter were much less than that in the gizzard.

The protein localises to the cytoplasm. The protein resides in the cytosol. Its subcellular location is the membrane. It carries out the reaction L-seryl-[myosin light chain] + ATP = O-phospho-L-seryl-[myosin light chain] + ADP + H(+). It catalyses the reaction L-threonyl-[myosin light chain] + ATP = O-phospho-L-threonyl-[myosin light chain] + ADP + H(+). With respect to regulation, activated by phosphorylation on Tyr-478. Isoforms which lack this tyrosine residue are not regulated in this way. All catalytically active isoforms require binding to calcium and calmodulin for activation. Phosphorylates a specific serine in the N-terminus of a myosin light chain, which leads to the formation of calmodulin/MLCK signal transduction complexes which allow selective transduction of calcium signals. This Gallus gallus (Chicken) protein is Myosin light chain kinase, smooth muscle (Mylk).